A 460-amino-acid polypeptide reads, in one-letter code: Tyrosine-protein phosphatase non-receptor type 18 (460 aa).

A Tyrosine-protein phosphatase domain is found at 26 to 291 (LAGEFSDIQA…RFLYHTVAQM (266 aa)). Substrate contacts are provided by residues D197, 229 to 235 (CSAGCGR), and Q276. Residue C229 is the Phosphocysteine intermediate of the active site. The interval 361–460 (GAPAGAGSGT…RDPPAEWTRV (100 aa)) is disordered. Gly residues predominate over residues 364–378 (AGAGSGTQTGTGTGT). Position 389 is a phosphotyrosine (Y389). Phosphothreonine is present on T393. Y426 carries the post-translational modification Phosphotyrosine. Over residues 449–460 (GPRDPPAEWTRV) the composition is skewed to basic and acidic residues.

The protein belongs to the protein-tyrosine phosphatase family. Non-receptor class 4 subfamily. Interacts with PSTPIP1. Expressed in brain, colon and several tumor-derived cell lines.

Its subcellular location is the nucleus. It localises to the cytoplasm. It carries out the reaction O-phospho-L-tyrosyl-[protein] + H2O = L-tyrosyl-[protein] + phosphate. In terms of biological role, differentially dephosphorylate autophosphorylated tyrosine kinases which are known to be overexpressed in tumor tissues. The sequence is that of Tyrosine-protein phosphatase non-receptor type 18 (PTPN18) from Homo sapiens (Human).